The primary structure comprises 128 residues: Large ribosomal subunit protein mL51 (128 aa).

The transit peptide at 1–31 (MAGNLLSGAGRRLWDWVPLACRSFSLGVPRL) directs the protein to the mitochondrion.

This sequence belongs to the mitochondrion-specific ribosomal protein mL51 family. In terms of assembly, component of the mitochondrial large ribosomal subunit (mt-LSU). Mature mammalian 55S mitochondrial ribosomes consist of a small (28S) and a large (39S) subunit. The 28S small subunit contains a 12S ribosomal RNA (12S mt-rRNA) and 30 different proteins. The 39S large subunit contains a 16S rRNA (16S mt-rRNA), a copy of mitochondrial valine transfer RNA (mt-tRNA(Val)), which plays an integral structural role, and 52 different proteins. Interacts with OXA1L.

Its subcellular location is the mitochondrion. The sequence is that of Large ribosomal subunit protein mL51 (MRPL51) from Homo sapiens (Human).